Reading from the N-terminus, the 225-residue chain is Ribonuclease 3 (225 aa).

Residues 5 to 127 (MNKLTSKLGY…IIGAIYLDSD (123 aa)) enclose the RNase III domain. Glu40 is a binding site for Mg(2+). Asp44 is a catalytic residue. Positions 113 and 116 each coordinate Mg(2+). Glu116 is a catalytic residue. The 71-residue stretch at 154–224 (DPKTRLQEFL…AETALEQLTN (71 aa)) folds into the DRBM domain.

The protein belongs to the ribonuclease III family. Homodimer. Mg(2+) is required as a cofactor.

It localises to the cytoplasm. It catalyses the reaction Endonucleolytic cleavage to 5'-phosphomonoester.. Functionally, digests double-stranded RNA. Involved in the processing of primary rRNA transcript to yield the immediate precursors to the large and small rRNAs (23S and 16S). Processes some mRNAs, and tRNAs when they are encoded in the rRNA operon. Processes pre-crRNA and tracrRNA of type II CRISPR loci if present in the organism. The polypeptide is Ribonuclease 3 (Vibrio cholerae serotype O1 (strain ATCC 39315 / El Tor Inaba N16961)).